We begin with the raw amino-acid sequence, 83 residues long: Aspergillic acid biosynthesis cluster protein F (83 aa).

It functions in the pathway secondary metabolite biosynthesis. In terms of biological role, part of the gene cluster that mediates the biosynthesis of aspergillic acid, a hydroxamic acid-containing pyrazinone with aliphatic side chains that originates from leucine (Leu) and isoleucine (Ile). Aspergillic acid has antibiotic properties and was shown to be lethal to mice. The first step in the pathway is the production of deoxyaspergillic acid via a condensation between the Ile amine and the Leu carboxylic acid, followed by a reductive release from the protein forming the dipeptide aldehyde NH(2)-Leu-Ile-CHO, which could undergo an intermolecular cyclization resulting in a dihydropyrazinone. As the NRPS asaC lacks a condensation domain, it is improbable that it is responsible for condensation of Leu and Ile. One possibility is that asaC acts on a previously condensed dipeptide and functions as a Leu-Ile reductase to yield deoxyaspergillic acid. After asaC forms deoxyaspergillic acid, the cytochrome P450 asaD oxidizes the pyrazinone to the hydroxamic acid-containing bioactive metabolite aspergillic acid. The hydroxylase/desaturase asaB can then convert aspergillic acid to hydroxyaspergillic acid. Both aspergillic acid and hydroxyaspergillic acid can form complexes with iron producing ferriaspergillin analogs. The sequence is that of Aspergillic acid biosynthesis cluster protein F from Aspergillus flavus (strain ATCC 200026 / FGSC A1120 / IAM 13836 / NRRL 3357 / JCM 12722 / SRRC 167).